Reading from the N-terminus, the 92-residue chain is cAMP-dependent protein kinase inhibitor beta (92 aa).

Residues 1 to 26 (MGGGTSPEAQQDSVMRTDSSEMTDVE) form a disordered region. A compositionally biased stretch (polar residues) spans 7–26 (PEAQQDSVMRTDSSEMTDVE). Residue Ser-56 is modified to Phosphoserine. Basic and acidic residues predominate over residues 70–82 (EDAKTKNEEKDQG). Positions 70 to 92 (EDAKTKNEEKDQGQPKTPLNEGK) are disordered.

This sequence belongs to the PKI family.

Its function is as follows. Extremely potent competitive inhibitor of cAMP-dependent protein kinase activity, this protein interacts with the catalytic subunit of the enzyme after the cAMP-induced dissociation of its regulatory chains. The protein is cAMP-dependent protein kinase inhibitor beta (Pkib) of Mus musculus (Mouse).